Consider the following 312-residue polypeptide: Malate dehydrogenase (312 aa).

NAD(+) contacts are provided by residues 7–13 (GAAGGIG) and aspartate 34. Residues arginine 81 and arginine 87 each coordinate substrate. NAD(+) is bound by residues asparagine 94 and 117-119 (ITN). The substrate site is built by asparagine 119 and arginine 153. Histidine 177 functions as the Proton acceptor in the catalytic mechanism. Methionine 227 contributes to the NAD(+) binding site.

Belongs to the LDH/MDH superfamily. MDH type 1 family. In terms of assembly, homodimer.

The catalysed reaction is (S)-malate + NAD(+) = oxaloacetate + NADH + H(+). In terms of biological role, catalyzes the reversible oxidation of malate to oxaloacetate. This chain is Malate dehydrogenase, found in Escherichia coli O7:K1 (strain IAI39 / ExPEC).